The following is a 438-amino-acid chain: MSVLVVGMSHRSAPVALLEKLSMDDGVRTNTVSDLVARPSLAEAMIVSTCNRLEVYAMTSSFHTGVNDVVEVLHDMSGVDMEELRGYLYVRYADAAAEHMMEVTSGLDSMVVGEQQIIGQVRTAYHSATEAGTVGPALHGLVQASLHTGKRVHTETDIDDAGASMVSFACDEALAQMSATNFAGCRALVLGAGAMASLAATHLGRLGIEHITVANRTFERAQRLADHAVEAGVAASAIEFERRMDVLCDVDVVVSATGANTFTIEAANIPAAHGDLMMIDLSLPRDISDDVAEVPGVHLVNIEKLRDVASSGEAKDHAAQRIVAEELEAYTSAQRIRDVAPAVAALRRHASSLIDSELARLSTRVPSMDEDDFSEVQRTVRRVVDKLLHQPTVRVKELAAQSGTVSYDTAIQELFGLAVEATPVAVNVDELPERINKR.

Residues 49-52 (TCNR), S109, 114-116 (EQQ), and Q120 each bind substrate. The active-site Nucleophile is the C50. 191–196 (GAGAMA) contributes to the NADP(+) binding site.

Belongs to the glutamyl-tRNA reductase family. As to quaternary structure, homodimer.

The enzyme catalyses (S)-4-amino-5-oxopentanoate + tRNA(Glu) + NADP(+) = L-glutamyl-tRNA(Glu) + NADPH + H(+). It functions in the pathway porphyrin-containing compound metabolism; protoporphyrin-IX biosynthesis; 5-aminolevulinate from L-glutamyl-tRNA(Glu): step 1/2. Functionally, catalyzes the NADPH-dependent reduction of glutamyl-tRNA(Glu) to glutamate 1-semialdehyde (GSA). In Corynebacterium diphtheriae (strain ATCC 700971 / NCTC 13129 / Biotype gravis), this protein is Glutamyl-tRNA reductase.